We begin with the raw amino-acid sequence, 639 residues long: Ubiquitin-like modifier-activating enzyme ATG7 (639 aa).

The short motif at 322 to 327 (GAGTLG) is the GXGXXG motif element. The active-site Glycyl thioester intermediate is the Cys-502.

The protein belongs to the ATG7 family. As to quaternary structure, homodimer.

It localises to the cytoplasm. The protein localises to the preautophagosomal structure. Its function is as follows. E1-like activating enzyme involved in the 2 ubiquitin-like systems required for cytoplasm to vacuole transport (Cvt) and autophagy. Activates ATG12 for its conjugation with ATG5 and ATG8 for its conjugation with phosphatidylethanolamine. Both systems are needed for the ATG8 association to Cvt vesicles and autophagosomes membranes. Autophagy is essential for maintenance of amino acid levels and protein synthesis under nitrogen starvation. Required for selective autophagic degradation of the nucleus (nucleophagy) as well as for mitophagy which contributes to regulate mitochondrial quantity and quality by eliminating the mitochondria to a basal level to fulfill cellular energy requirements and preventing excess ROS production. Plays a role in the regulation of filamentous growth and chronological longevity. The chain is Ubiquitin-like modifier-activating enzyme ATG7 (APG7) from Candida albicans (strain SC5314 / ATCC MYA-2876) (Yeast).